Here is a 382-residue protein sequence, read N- to C-terminus: D-galactonate dehydratase (382 aa).

Asp183 contributes to the Mg(2+) binding site. The active-site Proton donor is His185. Mg(2+) is bound by residues Glu209 and Glu235. His285 (proton acceptor) is an active-site residue.

The protein belongs to the mandelate racemase/muconate lactonizing enzyme family. GalD subfamily. The cofactor is Mg(2+).

The catalysed reaction is D-galactonate = 2-dehydro-3-deoxy-D-galactonate + H2O. The protein operates within carbohydrate acid metabolism; D-galactonate degradation; D-glyceraldehyde 3-phosphate and pyruvate from D-galactonate: step 1/3. Functionally, catalyzes the dehydration of D-galactonate to 2-keto-3-deoxy-D-galactonate. The chain is D-galactonate dehydratase from Pectobacterium atrosepticum (strain SCRI 1043 / ATCC BAA-672) (Erwinia carotovora subsp. atroseptica).